Consider the following 348-residue polypeptide: Nicotinate-nucleotide--dimethylbenzimidazole phosphoribosyltransferase (348 aa).

Glu-315 functions as the Proton acceptor in the catalytic mechanism.

It belongs to the CobT family.

The enzyme catalyses 5,6-dimethylbenzimidazole + nicotinate beta-D-ribonucleotide = alpha-ribazole 5'-phosphate + nicotinate + H(+). The protein operates within nucleoside biosynthesis; alpha-ribazole biosynthesis; alpha-ribazole from 5,6-dimethylbenzimidazole: step 1/2. Catalyzes the synthesis of alpha-ribazole-5'-phosphate from nicotinate mononucleotide (NAMN) and 5,6-dimethylbenzimidazole (DMB). In Dechloromonas aromatica (strain RCB), this protein is Nicotinate-nucleotide--dimethylbenzimidazole phosphoribosyltransferase.